Consider the following 312-residue polypeptide: Pyridoxal kinase (312 aa).

An N-acetylmethionine modification is found at Met-1. Positions 12 and 47 each coordinate pyridoxal. Thr-47 contributes to the pyridoxal 5'-phosphate binding site. Position 59 is a phosphoserine (Ser-59). Residue Asp-113 coordinates ATP. Asp-113 provides a ligand contact to Na(+). Asp-118 contacts Mg(2+). Thr-148 is a binding site for Na(+). 150–153 (NQFE) is an ATP binding site. Ser-164 carries the post-translational modification Phosphoserine. Residue Thr-186 participates in Na(+) binding. Residue 186-187 (TS) coordinates ATP. Ser-213 is modified (phosphoserine). ATP-binding positions include 226 to 228 (VEA) and Thr-233. Residue 234 to 235 (GD) coordinates pyridoxal 5'-phosphate. Asp-235 serves as the catalytic Proton acceptor. Ser-285 is subject to Phosphoserine.

The protein belongs to the pyridoxine kinase family. In terms of assembly, homodimer. The cofactor is Zn(2+). It depends on Mg(2+) as a cofactor.

The protein resides in the cytoplasm. It is found in the cytosol. It catalyses the reaction pyridoxal + ATP = pyridoxal 5'-phosphate + ADP + H(+). The enzyme catalyses pyridoxamine + ATP = pyridoxamine 5'-phosphate + ADP + H(+). The catalysed reaction is pyridoxine + ATP = pyridoxine 5'-phosphate + ADP + H(+). It functions in the pathway cofactor metabolism; pyridoxal 5'-phosphate salvage; pyridoxal 5'-phosphate from pyridoxal: step 1/1. Its pathway is cofactor metabolism; pyridoxal 5'-phosphate salvage; pyridoxine 5'-phosphate from pyridoxine: step 1/1. It participates in cofactor metabolism; pyridoxal 5'-phosphate salvage; pyridoxamine 5'-phosphate from pyridoxamine: step 1/1. With respect to regulation, activity is increased in the presence of K(+)or Na(+). Its function is as follows. Catalyzes the phosphorylation of the dietary vitamin B6 vitamers pyridoxal (PL), pyridoxine (PN) and pyridoxamine (PM) to form pyridoxal 5'-phosphate (PLP), pyridoxine 5'-phosphate (PNP) and pyridoxamine 5'-phosphate (PMP), respectively. PLP is the active form of vitamin B6, and acts as a cofactor for over 140 different enzymatic reactions. The sequence is that of Pyridoxal kinase from Mus musculus (Mouse).